The following is a 422-amino-acid chain: MRNIFKRNQEPNVAPATTTATMPLAPVAPADNSTESTGPGESQEDMFAKLKEKFFNEINKIPLPPWALIAMAVVAGLLLLTCCFCICKKCCCKKKKNKKEKGKGMKNAMNMKDMKGGQDDDDAETGLTEGEGEGEEEKEPENLGKLQFSLDYDFQANQLTVGVLQAAELPALDMGGTSDPYVKVFLLPDKKKKYETKVHRKTLNPAFNETFTFKVPYQELAGKTLVMAIYDFDRFSKHDIIGEVKVPMNTVDLGQPIEEWRDLQGGEKEEPEKLGDICTSLRYVPTAGKLTVCILEAKNLKKMDVGGLSDPYVKIHLMQNGKRLKKKKTTVKKKTLNPYFNESFSFEIPFEQIQKVQVVVTVLDYDKLGKNEAIGKIFVGSNATGTELRHWSDMLANPRRPIAQWHSLKPEEEVDALLGKNK.

A disordered region spans residues 1-43; that stretch reads MRNIFKRNQEPNVAPATTTATMPLAPVAPADNSTESTGPGESQ. The Vesicular portion of the chain corresponds to 1–60; sequence MRNIFKRNQEPNVAPATTTATMPLAPVAPADNSTESTGPGESQEDMFAKLKEKFFNEINK. Residues 14–30 show a composition bias toward low complexity; it reads APATTTATMPLAPVAPA. A compositionally biased stretch (polar residues) spans 31 to 40; the sequence is DNSTESTGPG. Asn-32 carries N-linked (GlcNAc...) asparagine glycosylation. Residues 61–87 traverse the membrane as a helical segment; that stretch reads IPLPPWALIAMAVVAGLLLLTCCFCIC. Residues 88–422 lie on the Cytoplasmic side of the membrane; that stretch reads KKCCCKKKKN…EVDALLGKNK (335 aa). The segment at 102–141 is disordered; sequence GKGMKNAMNMKDMKGGQDDDDAETGLTEGEGEGEEEKEPE. The segment covering 119 to 139 has biased composition (acidic residues); sequence DDDDAETGLTEGEGEGEEEKE. A phosphothreonine mark is found at Thr-125 and Thr-128. The segment at 136 to 382 is phospholipid binding; sequence EEKEPENLGK…AIGKIFVGSN (247 aa). 2 consecutive C2 domains span residues 142–261 and 273–406; these read NLGK…EEWR and KLGD…AQWH. The Ca(2+) site is built by Leu-172, Asp-173, and Asp-179. Thr-202 is subject to Phosphothreonine. Phosphotyrosine is present on Tyr-230. Residues Asp-231, Phe-232, Asp-233, Ser-236, Lys-237, Asp-239, Asp-304, Asp-310, Asp-364, and Asp-366 each coordinate Ca(2+). Thr-386 is subject to Phosphothreonine.

This sequence belongs to the synaptotagmin family. As to quaternary structure, homotetramer. Heterodimer; heterodimerizes with SYT1 in presence of calcium. Interacts with SCAMP5. Interacts with STON2. Interacts with PRRT2. (Microbial infection) Interacts with C.botulinum neurotoxin type B (BoNT/B, botB). In terms of assembly, (Microbial infection) Interacts with C.botulinum neurotoxin type G (BoNT/G, botG). Ca(2+) is required as a cofactor. In terms of processing, phosphorylation at Thr-202 by WNK1, changes the calcium requirement for SYT2-binding to phospholipid membranes.

It is found in the cytoplasmic vesicle. It localises to the secretory vesicle. The protein resides in the synaptic vesicle membrane. Its subcellular location is the chromaffin granule membrane. The protein localises to the cytoplasm. In terms of biological role, exhibits calcium-dependent phospholipid and inositol polyphosphate binding properties. May have a regulatory role in the membrane interactions during trafficking of synaptic vesicles at the active zone of the synapse. Plays a role in dendrite formation by melanocytes. (Microbial infection) Receptor for C.botulinum neurotoxin type B (BoNT/B, botB); interaction is improved in the presence of gangliosides. The toxin binds via the vesicular domain (residues 47-60). Functionally, (Microbial infection) Receptor for C.botulinum neurotoxin type G (BoNT/G, botG); gangliosides are not required for (or only very slightly improve) binding to a membrane-anchored receptor fragment. The toxin binds via the vesicular domain (residues 47-55). The polypeptide is Synaptotagmin-2 (Mus musculus (Mouse)).